A 232-amino-acid polypeptide reads, in one-letter code: Large ribosomal subunit protein uL1 (232 aa).

The protein belongs to the universal ribosomal protein uL1 family. As to quaternary structure, part of the 50S ribosomal subunit.

In terms of biological role, binds directly to 23S rRNA. The L1 stalk is quite mobile in the ribosome, and is involved in E site tRNA release. Protein L1 is also a translational repressor protein, it controls the translation of the L11 operon by binding to its mRNA. This Chlamydia trachomatis serovar L2 (strain ATCC VR-902B / DSM 19102 / 434/Bu) protein is Large ribosomal subunit protein uL1.